Reading from the N-terminus, the 285-residue chain is Probable endonuclease 4 (285 aa).

The Zn(2+) site is built by His-68, His-108, Glu-145, Asp-179, His-182, His-216, Asp-229, His-231, and Glu-261.

The protein belongs to the AP endonuclease 2 family. Requires Zn(2+) as cofactor.

The enzyme catalyses Endonucleolytic cleavage to 5'-phosphooligonucleotide end-products.. Endonuclease IV plays a role in DNA repair. It cleaves phosphodiester bonds at apurinic or apyrimidinic (AP) sites, generating a 3'-hydroxyl group and a 5'-terminal sugar phosphate. This chain is Probable endonuclease 4, found in Geotalea daltonii (strain DSM 22248 / JCM 15807 / FRC-32) (Geobacter daltonii).